The following is a 223-amino-acid chain: Octanoyltransferase (223 aa).

In terms of domain architecture, BPL/LPL catalytic spans D32–D207. Substrate contacts are provided by residues R71–H78, S138–G140, and G151–A153. C169 acts as the Acyl-thioester intermediate in catalysis.

Belongs to the LipB family.

The protein localises to the cytoplasm. It catalyses the reaction octanoyl-[ACP] + L-lysyl-[protein] = N(6)-octanoyl-L-lysyl-[protein] + holo-[ACP] + H(+). The protein operates within protein modification; protein lipoylation via endogenous pathway; protein N(6)-(lipoyl)lysine from octanoyl-[acyl-carrier-protein]: step 1/2. Catalyzes the transfer of endogenously produced octanoic acid from octanoyl-acyl-carrier-protein onto the lipoyl domains of lipoate-dependent enzymes. Lipoyl-ACP can also act as a substrate although octanoyl-ACP is likely to be the physiological substrate. The protein is Octanoyltransferase of Erwinia tasmaniensis (strain DSM 17950 / CFBP 7177 / CIP 109463 / NCPPB 4357 / Et1/99).